A 357-amino-acid chain; its full sequence is MNWVNKSVPQEFILLVFSDQPWLEIPPFVMFLFSYILTIFGNLTIILVSHVDFKLHTPMYFFLSNLSLLDLCYTTSTVPQMLVNICNTRKVISYGGCVAQLFIFLALGSTECLLLAVMCFDRFVAICRPLHYSIIMHQRLCFQLAAASWISGFSNSVLQSTWTLKMPLCGHKEVDHFFCEVPALLKLSCVDTTANEAELFFISVLFLLIPVTLILISYAFIVQAVLRIQSAEGQRKAFGTCGSHLIVVSLFYGTAISMYLQPPSPSSKDRGKMVSLFCGIIAPMLNPLIYTLRNKEVKEAFKRLVAKSLLNQEIRNMQMISFAKDTVLTYLTNFSASCPIFVITIENYCNLPQRKFP.

Over 1 to 25 (MNWVNKSVPQEFILLVFSDQPWLEI) the chain is Extracellular. The N-linked (GlcNAc...) asparagine glycan is linked to asparagine 5. Residues 26-49 (PPFVMFLFSYILTIFGNLTIILVS) traverse the membrane as a helical segment. The Cytoplasmic portion of the chain corresponds to 50-57 (HVDFKLHT). Residues 58-79 (PMYFFLSNLSLLDLCYTTSTVP) form a helical membrane-spanning segment. The Extracellular portion of the chain corresponds to 80–100 (QMLVNICNTRKVISYGGCVAQ). A disulfide bond links cysteine 97 and cysteine 189. Residues 101-120 (LFIFLALGSTECLLLAVMCF) traverse the membrane as a helical segment. Over 121-139 (DRFVAICRPLHYSIIMHQR) the chain is Cytoplasmic. Residues 140–158 (LCFQLAAASWISGFSNSVL) traverse the membrane as a helical segment. The Extracellular segment spans residues 159–195 (QSTWTLKMPLCGHKEVDHFFCEVPALLKLSCVDTTAN). Residues 196 to 219 (EAELFFISVLFLLIPVTLILISYA) form a helical membrane-spanning segment. Residues 220–236 (FIVQAVLRIQSAEGQRK) lie on the Cytoplasmic side of the membrane. A helical membrane pass occupies residues 237–259 (AFGTCGSHLIVVSLFYGTAISMY). Residues 260–272 (LQPPSPSSKDRGK) lie on the Extracellular side of the membrane. The helical transmembrane segment at 273–292 (MVSLFCGIIAPMLNPLIYTL) threads the bilayer. Topologically, residues 293–357 (RNKEVKEAFK…YCNLPQRKFP (65 aa)) are cytoplasmic.

The protein belongs to the G-protein coupled receptor 1 family.

The protein localises to the cell membrane. Its function is as follows. Odorant receptor. The polypeptide is Olfactory receptor 2B2 (OR2B2) (Homo sapiens (Human)).